A 141-amino-acid chain; its full sequence is MATKEFYFAIIGHCDQPIFEMDFPVGEKKTKESEGTRHLNHYIGHAALDIVDEHALTTSQMYLKMVDKFNEWYVSAFVTASRIRFIMLHTHRADEGIKQFFQEMYETYIKHAMNPFYEIDDVIESPAFEQKATLYGRKYLS.

This sequence belongs to the TRAPP small subunits family. Sedlin subfamily. Part of the multisubunit TRAPP (transport protein particle) complex.

It localises to the cytoplasm. It is found in the perinuclear region. Its subcellular location is the endoplasmic reticulum. The protein resides in the golgi apparatus. Functionally, may play a role in vesicular transport from endoplasmic reticulum to Golgi. Required for the systemic spread of the RNAi response. In Caenorhabditis elegans, this protein is Probable trafficking protein particle complex subunit 2 (sedl-1).